A 256-amino-acid chain; its full sequence is Pro-opiomelanocortin (256 aa).

Residues 1–26 (MPRSCYSRSGTLLLALLLQISMEVRG) form the signal peptide. C28 and C50 form a disulfide bridge. An O-linked (GalNAc...) threonine glycan is attached at T71. A Phenylalanine amide modification is found at F87. The segment at 88–120 (GRGNSSGASQKREEEAAAADPGFHGDGVEPGLR) is disordered. N91 carries an N-linked (GlcNAc...) asparagine glycan. Residues 100-122 (EEEAAAADPGFHGDGVEPGLRED) constitute a propeptide that is removed on maturation. S125 is modified (N-acetylserine; in Corticotropin). V137 carries the post-translational modification Valine amide. S155 carries the post-translational modification Phosphoserine.

It belongs to the POMC family. Specific enzymatic cleavages at paired basic residues yield the different active peptides. In terms of tissue distribution, ACTH and MSH are produced by the pituitary gland.

It is found in the secreted. Functionally, ACTH stimulates the adrenal glands to release cortisol. Its function is as follows. MSH (melanocyte-stimulating hormone) increases the pigmentation of skin by increasing melanin production in melanocytes. Beta-endorphin and Met-enkephalin are endogenous opiates. In terms of biological role, stimulates the adrenal glands to release cortisol. Functionally, anorexigenic peptide. Increases the pigmentation of skin by increasing melanin production in melanocytes. Its function is as follows. Increases the pigmentation of skin by increasing melanin production in melanocytes. Endogenous orexigenic opiate. In terms of biological role, endogenous opiate. The sequence is that of Pro-opiomelanocortin (POMC) from Cavia porcellus (Guinea pig).